A 228-amino-acid chain; its full sequence is ATP synthase F(0) complex subunit a (228 aa).

5 helical membrane-spanning segments follow: residues 13-33 (NILA…IFPM), 69-89 (WALI…LGLL), 98-118 (QLSM…LIGL), 139-159 (IPTL…ALGV), and 194-214 (ILLF…ALVF).

The protein belongs to the ATPase A chain family. In terms of assembly, component of the ATP synthase complex composed at least of ATP5F1A/subunit alpha, ATP5F1B/subunit beta, ATP5MC1/subunit c (homooctomer), MT-ATP6/subunit a, MT-ATP8/subunit 8, ATP5ME/subunit e, ATP5MF/subunit f, ATP5MG/subunit g, ATP5MK/subunit k, ATP5MJ/subunit j, ATP5F1C/subunit gamma, ATP5F1D/subunit delta, ATP5F1E/subunit epsilon, ATP5PF/subunit F6, ATP5PB/subunit b, ATP5PD/subunit d, ATP5PO/subunit OSCP. ATP synthase complex consists of a soluble F(1) head domain (subunits alpha(3) and beta(3)) - the catalytic core - and a membrane F(0) domain - the membrane proton channel (subunits c, a, 8, e, f, g, k and j). These two domains are linked by a central stalk (subunits gamma, delta, and epsilon) rotating inside the F1 region and a stationary peripheral stalk (subunits F6, b, d, and OSCP). Interacts with DNAJC30; interaction is direct.

It is found in the mitochondrion inner membrane. The catalysed reaction is H(+)(in) = H(+)(out). Subunit a, of the mitochondrial membrane ATP synthase complex (F(1)F(0) ATP synthase or Complex V) that produces ATP from ADP in the presence of a proton gradient across the membrane which is generated by electron transport complexes of the respiratory chain. ATP synthase complex consist of a soluble F(1) head domain - the catalytic core - and a membrane F(1) domain - the membrane proton channel. These two domains are linked by a central stalk rotating inside the F(1) region and a stationary peripheral stalk. During catalysis, ATP synthesis in the catalytic domain of F(1) is coupled via a rotary mechanism of the central stalk subunits to proton translocation. With the subunit c (ATP5MC1), forms the proton-conducting channel in the F(0) domain, that contains two crucial half-channels (inlet and outlet) that facilitate proton movement from the mitochondrial intermembrane space (IMS) into the matrix. Protons are taken up via the inlet half-channel and released through the outlet half-channel, following a Grotthuss mechanism. This is ATP synthase F(0) complex subunit a from Pelomedusa subrufa (African side-necked turtle).